A 133-amino-acid chain; its full sequence is Putative pre-16S rRNA nuclease (133 aa).

Belongs to the YqgF nuclease family.

It is found in the cytoplasm. Functionally, could be a nuclease involved in processing of the 5'-end of pre-16S rRNA. The polypeptide is Putative pre-16S rRNA nuclease (Bordetella pertussis (strain Tohama I / ATCC BAA-589 / NCTC 13251)).